The sequence spans 568 residues: Probable inactive 1-aminocyclopropane-1-carboxylate synthase-like protein 2 (568 aa).

The segment at 1–21 is disordered; that stretch reads MSHRSDTLPVPSGQRRGRVPR. Lysine 395 bears the N6-(pyridoxal phosphate)lysine mark.

This sequence belongs to the class-I pyridoxal-phosphate-dependent aminotransferase family.

This is Probable inactive 1-aminocyclopropane-1-carboxylate synthase-like protein 2 (ACCSL) from Homo sapiens (Human).